Here is a 151-residue protein sequence, read N- to C-terminus: Deoxyuridine 5'-triphosphate nucleotidohydrolase (151 aa).

Residues 70–72, Asn83, 87–89, and Met97 each bind substrate; these read RSG and LID.

It belongs to the dUTPase family. The cofactor is Mg(2+).

It carries out the reaction dUTP + H2O = dUMP + diphosphate + H(+). It participates in pyrimidine metabolism; dUMP biosynthesis; dUMP from dCTP (dUTP route): step 2/2. Functionally, this enzyme is involved in nucleotide metabolism: it produces dUMP, the immediate precursor of thymidine nucleotides and it decreases the intracellular concentration of dUTP so that uracil cannot be incorporated into DNA. The polypeptide is Deoxyuridine 5'-triphosphate nucleotidohydrolase (Sodalis glossinidius (strain morsitans)).